We begin with the raw amino-acid sequence, 84 residues long: Large ribosomal subunit protein bL27 (84 aa).

Residues 1 to 21 form a disordered region; it reads MAHKKGGGSTKNGRDSNPKYL.

The protein belongs to the bacterial ribosomal protein bL27 family.

This Pelodictyon phaeoclathratiforme (strain DSM 5477 / BU-1) protein is Large ribosomal subunit protein bL27.